A 428-amino-acid polypeptide reads, in one-letter code: UDP-N-acetylglucosamine 1-carboxyvinyltransferase 2 (428 aa).

22–23 contributes to the phosphoenolpyruvate binding site; sequence KN. A UDP-N-acetyl-alpha-D-glucosamine-binding site is contributed by Arg92. The active-site Proton donor is the Cys116. At Cys116 the chain carries 2-(S-cysteinyl)pyruvic acid O-phosphothioketal. UDP-N-acetyl-alpha-D-glucosamine is bound by residues 121 to 125, Asp304, and Ile326; that span reads RPIDQ.

This sequence belongs to the EPSP synthase family. MurA subfamily.

The protein localises to the cytoplasm. The catalysed reaction is phosphoenolpyruvate + UDP-N-acetyl-alpha-D-glucosamine = UDP-N-acetyl-3-O-(1-carboxyvinyl)-alpha-D-glucosamine + phosphate. Its pathway is cell wall biogenesis; peptidoglycan biosynthesis. In terms of biological role, cell wall formation. Adds enolpyruvyl to UDP-N-acetylglucosamine. This chain is UDP-N-acetylglucosamine 1-carboxyvinyltransferase 2, found in Shouchella clausii (strain KSM-K16) (Alkalihalobacillus clausii).